The following is a 572-amino-acid chain: Capsid vertex component 2 (572 aa).

The segment at 1–58 is interaction with major capsid protein/MCP; sequence MFRPRFEPMNLPKDSNKPSTLMVLADRLNFISCAEGSSKYASKLFEGTLIDAEIMTNR.

The protein belongs to the herpesviridae CVC2 protein family. In terms of assembly, heterodimerizes with CVC1. Interacts with major capsid protein/MCP and triplex capsid protein 1/TRX1 at the pentamer vertices. Interacts with the large tegument protein/LTP.

The protein localises to the virion. The protein resides in the host nucleus. Capsid vertex-specific component that plays a role during viral DNA encapsidation, assuring correct genome cleavage and presumably stabilizing capsids that contain full-length viral genomes. Participates in the interaction between the capsid and the tegument through interaction with the large tegument protein/LTP. The protein is Capsid vertex component 2 of Infectious laryngotracheitis virus (strain Thorne V882) (ILTV).